The chain runs to 38 residues: Photosystem II reaction center protein L (38 aa).

The helical transmembrane segment at 17–37 (SLFWGLLLIFVLAVLFSSYFF) threads the bilayer.

The protein belongs to the PsbL family. In terms of assembly, PSII is composed of 1 copy each of membrane proteins PsbA, PsbB, PsbC, PsbD, PsbE, PsbF, PsbH, PsbI, PsbJ, PsbK, PsbL, PsbM, PsbT, PsbY, PsbZ, Psb30/Ycf12, at least 3 peripheral proteins of the oxygen-evolving complex and a large number of cofactors. It forms dimeric complexes.

It is found in the plastid. The protein resides in the chloroplast thylakoid membrane. Its function is as follows. One of the components of the core complex of photosystem II (PSII). PSII is a light-driven water:plastoquinone oxidoreductase that uses light energy to abstract electrons from H(2)O, generating O(2) and a proton gradient subsequently used for ATP formation. It consists of a core antenna complex that captures photons, and an electron transfer chain that converts photonic excitation into a charge separation. This subunit is found at the monomer-monomer interface and is required for correct PSII assembly and/or dimerization. The sequence is that of Photosystem II reaction center protein L from Cyanidium caldarium (Red alga).